The primary structure comprises 491 residues: Cobyric acid synthase (491 aa).

The GATase cobBQ-type domain maps to alanine 253–leucine 429. The active-site Nucleophile is the cysteine 334. Histidine 421 is a catalytic residue.

The protein belongs to the CobB/CobQ family. CobQ subfamily.

It participates in cofactor biosynthesis; adenosylcobalamin biosynthesis. In terms of biological role, catalyzes amidations at positions B, D, E, and G on adenosylcobyrinic A,C-diamide. NH(2) groups are provided by glutamine, and one molecule of ATP is hydrogenolyzed for each amidation. This Mycobacterium ulcerans (strain Agy99) protein is Cobyric acid synthase.